A 123-amino-acid chain; its full sequence is UPF0738 protein BcerKBAB4_1107 (123 aa).

The protein belongs to the UPF0738 family.

This chain is UPF0738 protein BcerKBAB4_1107, found in Bacillus mycoides (strain KBAB4) (Bacillus weihenstephanensis).